Reading from the N-terminus, the 163-residue chain is Nucleotide-binding protein YajQ (163 aa).

It belongs to the YajQ family.

Functionally, nucleotide-binding protein. This is Nucleotide-binding protein YajQ from Salmonella paratyphi A (strain ATCC 9150 / SARB42).